The chain runs to 406 residues: Interactor protein for cytohesin exchange factors 1 (406 aa).

Positions 13 to 112 (HADCQGWLYK…WLNKLGFAVT (100 aa)) constitute a PH domain. 3 disordered regions span residues 120–173 (DEEC…FSSL), 253–285 (SLNN…EDDE), and 383–406 (PQDP…ENSL). Residues 123–134 (CYSESEQEDPEV) show a composition bias toward acidic residues. Residues 144-153 (ASTTSSPVAA) show a composition bias toward low complexity. At Arg164 the chain carries Phosphoserine. The segment covering 272-285 (MADREEIKSSEDDE) has biased composition (basic and acidic residues). The segment covering 392–406 (EVMNPTSSDCVENSL) has biased composition (polar residues).

As to quaternary structure, interacts with guanine-nucleotide exchange factors PSCD1, PSCD2, PSCD3 and PSCD4.

It is found in the cytoplasm. It localises to the cell membrane. In terms of biological role, enhances the promotion of guanine-nucleotide exchange by PSCD2 on ARF6 in a concentration-dependent manner. This is Interactor protein for cytohesin exchange factors 1 (Ipcef1) from Mus musculus (Mouse).